Consider the following 283-residue polypeptide: Elongation factor Ts (283 aa).

Residues 79–82 are involved in Mg(2+) ion dislocation from EF-Tu; the sequence is TDFV.

It belongs to the EF-Ts family.

The protein resides in the cytoplasm. Its function is as follows. Associates with the EF-Tu.GDP complex and induces the exchange of GDP to GTP. It remains bound to the aminoacyl-tRNA.EF-Tu.GTP complex up to the GTP hydrolysis stage on the ribosome. This Shewanella denitrificans (strain OS217 / ATCC BAA-1090 / DSM 15013) protein is Elongation factor Ts.